The sequence spans 264 residues: Phosphate import ATP-binding protein PstB 1 (264 aa).

The ABC transporter domain occupies 20-259 (LETRDLNIFY…PKIKLTEDYI (240 aa)). 52 to 59 (GASGSGKS) provides a ligand contact to ATP.

It belongs to the ABC transporter superfamily. Phosphate importer (TC 3.A.1.7) family. As to quaternary structure, the complex is composed of two ATP-binding proteins (PstB), two transmembrane proteins (PstC and PstA) and a solute-binding protein (PstS).

The protein localises to the cell membrane. The catalysed reaction is phosphate(out) + ATP + H2O = ADP + 2 phosphate(in) + H(+). Functionally, part of the ABC transporter complex PstSACB involved in phosphate import. Responsible for energy coupling to the transport system. The protein is Phosphate import ATP-binding protein PstB 1 of Ligilactobacillus salivarius (strain UCC118) (Lactobacillus salivarius).